A 207-amino-acid polypeptide reads, in one-letter code: Dephospho-CoA kinase (207 aa).

Residues 5–207 (IVGLTGGIAS…AALQTHRIEN (203 aa)) enclose the DPCK domain. ATP is bound at residue 13–18 (ASGKSA).

The protein belongs to the CoaE family.

The protein localises to the cytoplasm. The enzyme catalyses 3'-dephospho-CoA + ATP = ADP + CoA + H(+). It functions in the pathway cofactor biosynthesis; coenzyme A biosynthesis; CoA from (R)-pantothenate: step 5/5. Functionally, catalyzes the phosphorylation of the 3'-hydroxyl group of dephosphocoenzyme A to form coenzyme A. In Xanthomonas campestris pv. campestris (strain ATCC 33913 / DSM 3586 / NCPPB 528 / LMG 568 / P 25), this protein is Dephospho-CoA kinase.